Here is a 175-residue protein sequence, read N- to C-terminus: FMRFamide-like neuropeptides 1 (175 aa).

Positions 1-21 (MTLLYQVGLLLLVAATYKVSA) are cleaved as a signal peptide. Residues 22–68 (ECCTPGATSDFCTVFSMLSTMEQNEVMNFIGENCDGDAEVALQKMEK) constitute a propeptide that is removed on maturation. At Tyr-76 the chain carries Tyrosine amide. Positions 79 to 86 (SAAVKSLG) are excised as a propeptide. 6 positions are modified to phenylalanine amide: Phe-98, Phe-108, Phe-120, Phe-130, Phe-142, and Phe-154. A propeptide spanning residues 157 to 165 (SFDNFDRES) is cleaved from the precursor. At Phe-173 the chain carries Phenylalanine amide.

The protein belongs to the FARP (FMRFamide related peptide) family. In terms of processing, may be processed by convertase egl-3. Each flp gene is expressed in a distinct set of neurons. Flp-1 is expressed in the AVA interneurons, the M5 cholinergic pharyngeal motoneurons, and the AIA, AIY, AVE, AVK, RIG and RMG neurons.

Its subcellular location is the secreted. In terms of biological role, together with flp-18, plays a homeostatic role by acting on the GABAergic neural transmission at neuromuscular junctions to prevent overexcitation of the locomotor circuit. Its function is as follows. Inhibits the activity of dissected pharyngeal myogenic muscle system. Functionally, DPNFLRF-amide: Inhibits the activity of dissected pharyngeal myogenic muscle system. Acts as a ligand for the npr-22 receptor in vitro. In Caenorhabditis elegans, this protein is FMRFamide-like neuropeptides 1 (flp-1).